A 168-amino-acid chain; its full sequence is NADH-quinone oxidoreductase subunit B (168 aa).

4 residues coordinate [4Fe-4S] cluster: C49, C50, C114, and C144.

Belongs to the complex I 20 kDa subunit family. In terms of assembly, NDH-1 is composed of 14 different subunits. Subunits NuoB, C, D, E, F, and G constitute the peripheral sector of the complex. [4Fe-4S] cluster is required as a cofactor.

The protein localises to the cell membrane. It catalyses the reaction a quinone + NADH + 5 H(+)(in) = a quinol + NAD(+) + 4 H(+)(out). In terms of biological role, NDH-1 shuttles electrons from NADH, via FMN and iron-sulfur (Fe-S) centers, to quinones in the respiratory chain. Couples the redox reaction to proton translocation (for every two electrons transferred, four hydrogen ions are translocated across the cytoplasmic membrane), and thus conserves the redox energy in a proton gradient. This Wolbachia sp. subsp. Brugia malayi (strain TRS) protein is NADH-quinone oxidoreductase subunit B.